Consider the following 254-residue polypeptide: 30 kDa major early protein (254 aa).

In Human cytomegalovirus (strain Eisenhardt) (HHV-5), this protein is 30 kDa major early protein.